The sequence spans 735 residues: Polycomb protein sop-2 (735 aa).

The span at 1–15 (MSSNLTSNEMSSTSA) shows a compositional bias: polar residues. Disordered stretches follow at residues 1–59 (MSSN…SSSS), 223–288 (AARS…APAA), and 300–534 (PQES…PVLQ). The segment at 224 to 503 (ARSSRMAARR…APATPATPAS (280 aa)) is RNA-binding. The segment covering 239 to 288 (YRGAFRGAARGAPSRRPAPAAEVAPETPVAAPMAPAAPAAPATPEAAPAA) has biased composition (low complexity). Basic and acidic residues-rich tracts occupy residues 317–355 (DTSK…DGGR) and 389–398 (RAAEKKKPED). Over residues 399 to 413 (SDAAEEQEVEMEVDN) the composition is skewed to acidic residues. The segment covering 450–470 (VEPKKEPVDEPAEKIPKRSEA) has biased composition (basic and acidic residues). Low complexity predominate over residues 471–504 (APEVPATATTKEAPPSTSSSPPDAPATPATPASS). A compositionally biased stretch (polar residues) spans 520-534 (LTGSPPESETPPVLQ). Residues 621-712 (LVENNHEATL…YGTEVLNHYR (92 aa)) are SAM-like.

As to quaternary structure, homodimer. Interacts with ubc-9. Binds through its N-terminal region to the N-terminal region of sor-1. In terms of processing, sumoylated by ubc-9. Sumoylation is required for the transcriptional regulation of homeotic genes. Widely expressed. Weakly expressed in most somatic cells of 50-cell stage embryos. At 200 cell stage, it is strongly expressed. By comma stage, it is expressed in most somatic cells.

The protein localises to the nucleus. Polycomb group (PcG) protein. PcG proteins act by forming multiprotein complexes, which are required to maintain the transcriptionally repressive state of homeotic genes throughout development. PcG proteins are not required to initiate repression, but to maintain it during later stages of development. Also required to repress expression of other genes and for localization of sor-1. Binds RNA. The polypeptide is Polycomb protein sop-2 (sop-2) (Caenorhabditis elegans).